A 365-amino-acid polypeptide reads, in one-letter code: Neutral protease 2 homolog mep20 (365 aa).

Residues M1–A19 form the signal peptide. Residues L20–R172 constitute a propeptide that is removed on maturation. N-linked (GlcNAc...) asparagine glycosylation is present at N73. Cystine bridges form between C178–C249 and C256–C274. Zn(2+) is bound at residue H299. Residue E300 is part of the active site. Residues H303 and D314 each coordinate Zn(2+). A glycan (N-linked (GlcNAc...) asparagine) is linked at N351.

The protein belongs to the peptidase M35 family. Zn(2+) serves as cofactor.

The protein localises to the secreted. The enzyme catalyses Preferential cleavage of bonds with hydrophobic residues in P1'. Also 3-Asn-|-Gln-4 and 8-Gly-|-Ser-9 bonds in insulin B chain.. Secreted metalloproteinase that allows assimilation of proteinaceous substrates. Shows high activities on basic nuclear substrates such as histone and protamine. May be involved in virulence. The sequence is that of Neutral protease 2 homolog mep20 (mep20) from Aspergillus fumigatus (Neosartorya fumigata).